Consider the following 453-residue polypeptide: tRNA modification GTPase MnmE (453 aa).

(6S)-5-formyl-5,6,7,8-tetrahydrofolate is bound by residues Arg-22, Glu-79, and Lys-119. Residues 215–376 (GMKVVIAGRP…LKLHLKSLMG (162 aa)) enclose the TrmE-type G domain. A K(+)-binding site is contributed by Asn-225. Residues 225 to 230 (NAGKSS), 244 to 250 (TEIAGTT), 269 to 272 (DTAG), and 334 to 337 (NKAD) contribute to the GTP site. Ser-229 is a Mg(2+) binding site. Residues Thr-244, Ile-246, and Thr-249 each contribute to the K(+) site. A Mg(2+)-binding site is contributed by Thr-250. Residue Lys-453 coordinates (6S)-5-formyl-5,6,7,8-tetrahydrofolate.

This sequence belongs to the TRAFAC class TrmE-Era-EngA-EngB-Septin-like GTPase superfamily. TrmE GTPase family. In terms of assembly, homodimer. Heterotetramer of two MnmE and two MnmG subunits. Requires K(+) as cofactor.

The protein resides in the cytoplasm. Exhibits a very high intrinsic GTPase hydrolysis rate. Involved in the addition of a carboxymethylaminomethyl (cmnm) group at the wobble position (U34) of certain tRNAs, forming tRNA-cmnm(5)s(2)U34. The polypeptide is tRNA modification GTPase MnmE (Shewanella putrefaciens (strain CN-32 / ATCC BAA-453)).